The primary structure comprises 541 residues: Glucose-6-phosphate isomerase (541 aa).

Catalysis depends on Glu-346, which acts as the Proton donor. Residues His-377 and Lys-506 contribute to the active site.

It belongs to the GPI family.

It localises to the cytoplasm. It catalyses the reaction alpha-D-glucose 6-phosphate = beta-D-fructose 6-phosphate. The protein operates within carbohydrate biosynthesis; gluconeogenesis. It functions in the pathway carbohydrate degradation; glycolysis; D-glyceraldehyde 3-phosphate and glycerone phosphate from D-glucose: step 2/4. Its function is as follows. Catalyzes the reversible isomerization of glucose-6-phosphate to fructose-6-phosphate. In Rhizobium etli (strain ATCC 51251 / DSM 11541 / JCM 21823 / NBRC 15573 / CFN 42), this protein is Glucose-6-phosphate isomerase.